The chain runs to 279 residues: Digeranylgeranylglyceryl phosphate synthase (279 aa).

9 helical membrane-spanning segments follow: residues 16 to 36, 40 to 60, 77 to 99, 104 to 121, 124 to 144, 146 to 166, 192 to 212, 220 to 240, and 259 to 279; these read LIAG…LPPI, LLIF…NDYF, GALS…ILIA, FEAF…YLYA, LKPQ…ITPI, GAIA…AFLV, IVWG…ATII, AGIG…LWAA, and LKIA…TKGV.

This sequence belongs to the UbiA prenyltransferase family. DGGGP synthase subfamily. Requires Mg(2+) as cofactor.

The protein localises to the cell membrane. The catalysed reaction is sn-3-O-(geranylgeranyl)glycerol 1-phosphate + (2E,6E,10E)-geranylgeranyl diphosphate = 2,3-bis-O-(geranylgeranyl)-sn-glycerol 1-phosphate + diphosphate. It participates in membrane lipid metabolism; glycerophospholipid metabolism. In terms of biological role, prenyltransferase that catalyzes the transfer of the geranylgeranyl moiety of geranylgeranyl diphosphate (GGPP) to the C2 hydroxyl of (S)-3-O-geranylgeranylglyceryl phosphate (GGGP). This reaction is the second ether-bond-formation step in the biosynthesis of archaeal membrane lipids. This is Digeranylgeranylglyceryl phosphate synthase from Thermococcus sibiricus (strain DSM 12597 / MM 739).